Consider the following 534-residue polypeptide: Peptide chain release factor 3 (534 aa).

Residues 9–278 (ARRRTFAIIS…FFVEHAPSPQ (270 aa)) enclose the tr-type G domain. GTP is bound by residues 18 to 25 (SHPDAGKT), 86 to 90 (DTPGH), and 140 to 143 (NKLD).

The protein belongs to the TRAFAC class translation factor GTPase superfamily. Classic translation factor GTPase family. PrfC subfamily.

It is found in the cytoplasm. Its function is as follows. Increases the formation of ribosomal termination complexes and stimulates activities of RF-1 and RF-2. It binds guanine nucleotides and has strong preference for UGA stop codons. It may interact directly with the ribosome. The stimulation of RF-1 and RF-2 is significantly reduced by GTP and GDP, but not by GMP. The polypeptide is Peptide chain release factor 3 (Xylella fastidiosa (strain M23)).